The chain runs to 190 residues: Double zinc ribbon protein MJ0416 (190 aa).

The DZANK-type zinc-finger motif lies at 134-183; it reads CPNCNNYISDSWKYCAHCGAKLKEEEEEVLRCPNCKRPVQPEWIVCPYCG.

The sequence is that of Double zinc ribbon protein MJ0416 from Methanocaldococcus jannaschii (strain ATCC 43067 / DSM 2661 / JAL-1 / JCM 10045 / NBRC 100440) (Methanococcus jannaschii).